A 274-amino-acid polypeptide reads, in one-letter code: Acyl-[acyl-carrier-protein]--UDP-N-acetylglucosamine O-acyltransferase (274 aa).

This sequence belongs to the transferase hexapeptide repeat family. LpxA subfamily. Homotrimer.

It localises to the cytoplasm. It carries out the reaction a (3R)-hydroxyacyl-[ACP] + UDP-N-acetyl-alpha-D-glucosamine = a UDP-3-O-[(3R)-3-hydroxyacyl]-N-acetyl-alpha-D-glucosamine + holo-[ACP]. Its pathway is glycolipid biosynthesis; lipid IV(A) biosynthesis; lipid IV(A) from (3R)-3-hydroxytetradecanoyl-[acyl-carrier-protein] and UDP-N-acetyl-alpha-D-glucosamine: step 1/6. Its function is as follows. Involved in the biosynthesis of lipid A, a phosphorylated glycolipid that anchors the lipopolysaccharide to the outer membrane of the cell. The sequence is that of Acyl-[acyl-carrier-protein]--UDP-N-acetylglucosamine O-acyltransferase from Bartonella henselae (strain ATCC 49882 / DSM 28221 / CCUG 30454 / Houston 1) (Rochalimaea henselae).